The sequence spans 455 residues: Glycylpeptide N-tetradecanoyltransferase (455 aa).

38–41 (HKFW) contacts tetradecanoyl-CoA. Residues 168-204 (INFLCVHKQLRSKRLTPVLIKEITRRVNKCDIWHALY) are myristoyl CoA-binding. The active-site Proton acceptor; via carboxylate is Leu-455.

The protein belongs to the NMT family. Monomer. The N-terminus is blocked.

Its subcellular location is the cytoplasm. It catalyses the reaction N-terminal glycyl-[protein] + tetradecanoyl-CoA = N-tetradecanoylglycyl-[protein] + CoA + H(+). Inhibited by diethylpyrocarbonate. Competitively inhibited by S-(2-oxo)pentadecyl-CoA, a non hydrolysable myristoyl-CoA analog, and by SC-58272, a peptidomimetic derived from the N-terminal sequence of a natural substrate. Its function is as follows. Adds a myristoyl group to the N-terminal glycine residue of certain cellular proteins. Substrate specificity requires an N-terminal glycine in the nascent polypeptide substrates. Uncharged amino acids are preferred at position 2 while neutral residues are favored at positions 3 and 4. Ser is present at position 5 in almost all known N-myristoyl proteins and Lys is commonly encountered at postion 6. This chain is Glycylpeptide N-tetradecanoyltransferase (NMT1), found in Saccharomyces cerevisiae (strain ATCC 204508 / S288c) (Baker's yeast).